Here is a 329-residue protein sequence, read N- to C-terminus: Delta-aminolevulinic acid dehydratase (329 aa).

The active-site Schiff-base intermediate with substrate is the Lys-202. Residues Arg-212 and Arg-223 each contribute to the 5-aminolevulinate site. Glu-239 contacts Mg(2+). The active-site Schiff-base intermediate with substrate is Lys-254. 5-aminolevulinate contacts are provided by Ser-280 and Tyr-319.

Belongs to the ALAD family. In terms of assembly, homooctamer.

It carries out the reaction 2 5-aminolevulinate = porphobilinogen + 2 H2O + H(+). It participates in porphyrin-containing compound metabolism; protoporphyrin-IX biosynthesis; coproporphyrinogen-III from 5-aminolevulinate: step 1/4. In terms of biological role, catalyzes an early step in the biosynthesis of tetrapyrroles. Binds two molecules of 5-aminolevulinate per subunit, each at a distinct site, and catalyzes their condensation to form porphobilinogen. In Mycobacterium tuberculosis (strain CDC 1551 / Oshkosh), this protein is Delta-aminolevulinic acid dehydratase (hemB).